Here is a 292-residue protein sequence, read N- to C-terminus: 2-methylisocitrate lyase (292 aa).

44-46 (SGA) serves as a coordination point for substrate. Residues Asp-84 and Asp-86 each coordinate Mg(2+). Residues 121-122 (CG), Arg-156, Glu-186, 208-210 (NMT), Arg-239, and Arg-268 contribute to the substrate site.

It belongs to the isocitrate lyase/PEP mutase superfamily. Methylisocitrate lyase family. Homotetramer; dimer of dimers. Mg(2+) is required as a cofactor.

The catalysed reaction is (2S,3R)-3-hydroxybutane-1,2,3-tricarboxylate = pyruvate + succinate. It participates in organic acid metabolism; propanoate degradation. Functionally, involved in the catabolism of short chain fatty acids (SCFA) via the 2-methylcitrate cycle I (propionate degradation route). Catalyzes the thermodynamically favored C-C bond cleavage of (2R,3S)-2-methylisocitrate to yield pyruvate and succinate via an alpha-carboxy-carbanion intermediate. The sequence is that of 2-methylisocitrate lyase from Shewanella oneidensis (strain ATCC 700550 / JCM 31522 / CIP 106686 / LMG 19005 / NCIMB 14063 / MR-1).